A 304-amino-acid chain; its full sequence is MLFEQIAANKRKTIFIILGFFIFVLMVGAAIGIIVWNNYLNGLILAAVIGAFYILIMVMSSSSVVMAMNHAKEVTSKDQAPVLWDTVESMAMVAGIPMPKVYIVEDASPNAFATGISPEKGAVAVTRGLLNKLERYELEGVIAHEISHIRNYDIRLSTIAIALVAVIAILSDLAMRMIFWGSLTGGRNNRKSDNNNSGGAQAIIYIVALIFVILAPIIATAIQFALSRNREYLADASAVELTRNPDGLIQALQKISGDSKKMEEVSASSESIYFASPLKSKKNKPGLFDSHPPISSRIERLENM.

Transmembrane regions (helical) follow at residues 14 to 34 and 39 to 59; these read IFII…IGII and YLNG…IMVM. Histidine 144 contacts Zn(2+). Glutamate 145 is an active-site residue. Zn(2+) is bound at residue histidine 148. The next 2 helical transmembrane spans lie at 159–179 and 202–222; these read IAIA…RMIF and AIIY…ATAI. Position 231 (glutamate 231) interacts with Zn(2+).

The protein belongs to the peptidase M48B family. Zn(2+) serves as cofactor.

The protein resides in the cell membrane. The polypeptide is Protease HtpX homolog (Listeria monocytogenes serotype 4b (strain CLIP80459)).